A 310-amino-acid chain; its full sequence is Adenylyl-sulfate kinase 4, chloroplastic (310 aa).

Residues 1 to 75 constitute a chloroplast transit peptide; sequence MDVAAMARCV…MAKDESISSR (75 aa). Position 116 to 124 (116 to 124) interacts with ATP; that stretch reads GLSGSGKSS. Residues Asp-146, Arg-149, Arg-163, Asn-166, 189–190, and Gly-239 contribute to the substrate site; that span reads IS. Ser-190 (phosphoserine intermediate) is an active-site residue.

The protein belongs to the APS kinase family. In terms of assembly, homodimer; disulfide-linked. In terms of tissue distribution, expressed in root vasculature, root tips, leaf epidermal and guard cells, pollen grains and radicle of immature seeds.

The protein localises to the plastid. The protein resides in the chloroplast. The catalysed reaction is adenosine 5'-phosphosulfate + ATP = 3'-phosphoadenylyl sulfate + ADP + H(+). It functions in the pathway sulfur metabolism; hydrogen sulfide biosynthesis; sulfite from sulfate: step 2/3. Catalyzes the phosphorylation of adenosine 5'-phosphosulfate to 3'-phosphoadenylyl sulfate, which is the activated sulfate form for sulfation reactions. Essential for plant reproduction and viability. This is Adenylyl-sulfate kinase 4, chloroplastic (APK4) from Arabidopsis thaliana (Mouse-ear cress).